A 218-amino-acid chain; its full sequence is Putative tRNA methyltransferase MG248 (218 aa).

Belongs to the TrmK family.

The protein localises to the cytoplasm. In Mycoplasma genitalium (strain ATCC 33530 / DSM 19775 / NCTC 10195 / G37) (Mycoplasmoides genitalium), this protein is Putative tRNA methyltransferase MG248.